The chain runs to 67 residues: Large ribosomal subunit protein bL35 (67 aa).

It belongs to the bacterial ribosomal protein bL35 family.

The chain is Large ribosomal subunit protein bL35 from Dehalococcoides mccartyi (strain ATCC BAA-2266 / KCTC 15142 / 195) (Dehalococcoides ethenogenes (strain 195)).